Reading from the N-terminus, the 760-residue chain is Cyclin-D-binding Myb-like transcription factor 1 (760 aa).

The interaction with CCND2 stretch occupies residues 1–237 (MSTVEEDSDT…TPEEIEKLKE (237 aa)). A required for transcriptional activation region spans residues 87-170 (VTMTATTEVA…IDILMNNIER (84 aa)). A required for DNA-binding region spans residues 87–458 (VTMTATTEVA…DNTAISSSPM (372 aa)). An interaction with CCND1, CCND2 and CCND3 region spans residues 176 to 760 (GIKDATEIIF…KDVEDLVNCH (585 aa)). The Myb-like 1 domain maps to 225–263 (GKYTPEEIEKLKELRIKHGNDWATIGAALGRSASSVKDR). An HTH myb-type domain is found at 268 to 333 (KDTCNTGKWT…KWLNYLNWKQ (66 aa)). The segment at residues 306–329 (WAAVAERVGTRSEKQCRSKWLNYL) is a DNA-binding region (H-T-H motif). The region spanning 339–388 (WTKEDEINLILRIAELDVADENDINWDLLAEGWSSVRSPQWLRSKWWTIK) is the Myb-like 2 domain. 2 disordered regions span residues 414–435 (KNNP…NTNS) and 738–760 (IGSS…VNCH). The tract at residues 459–760 (AALQIPVQIT…KDVEDLVNCH (302 aa)) is required for transcriptional activation.

This sequence belongs to the DMTF1 family. In terms of assembly, interacts with the D-type cyclins CCND1, CCND2 and CCND3. Interaction with D-type cyclins may modulate transcriptional activation by this protein. Phosphorylated by the cyclin-D2/CDK4, cyclin-D3/CDK4 and cyclin-D2/CDK6 complexes and to a lesser extent by the cyclin-D1/CDK4 complex. Expressed at relatively low levels in colonic mucosa, ovary, peripheral leukocytes, prostate and small intestine, and at higher levels in spleen, testis and thymus. Expressed in multiple regions of the brain and CNS including amygdala, caudate, corpus callosum, hippocampus, substantia nigra and subthalamic nucleus. Isoform 1 is the predominant isoform in monocytes, macrophages and neutrophils, isoform 2 is most strongly expressed in peripheral blood leukocytes and quiescent CD34 positive cells, and isoform 3 is expressed at low levels in all hematopoietic cell types. Expression is frequently reduced in non-small-cell lung carcinomas (NSCLC) due to hemizygous gene deletion, strongly suggesting that this locus is haploinsufficient for tumor suppression. Loss of this locus frequently occurs in tumors which retain wild-type CDKN2A/ARF and p53/TP53 loci. Hemizygous gene deletion has also been observed in leukemic blasts from patients with abnormalities of the long arm of chromosome 7.

It is found in the nucleus. Transcriptional activator which activates the CDKN2A/ARF locus in response to Ras-Raf signaling, thereby promoting p53/TP53-dependent growth arrest. Binds to the consensus sequence 5'-CCCG[GT]ATGT-3'. Isoform 1 may cooperate with MYB to activate transcription of the ANPEP gene. Isoform 2 may antagonize transcriptional activation by isoform 1. This Homo sapiens (Human) protein is Cyclin-D-binding Myb-like transcription factor 1 (DMTF1).